A 129-amino-acid chain; its full sequence is Cytochrome c oxidase subunit 5B, mitochondrial (129 aa).

The N-terminal 31 residues, 1 to 31 (MASRLLRGAGTLAAQALRARGPSGAAAMRSM), are a transit peptide targeting the mitochondrion. N6-acetyllysine occurs at positions 68 and 86. Cysteine 91, cysteine 93, cysteine 113, and cysteine 116 together coordinate Zn(2+). At lysine 121 the chain carries N6-acetyllysine.

Belongs to the cytochrome c oxidase subunit 5B family. Component of the cytochrome c oxidase (complex IV, CIV), a multisubunit enzyme composed of 14 subunits. The complex is composed of a catalytic core of 3 subunits MT-CO1, MT-CO2 and MT-CO3, encoded in the mitochondrial DNA, and 11 supernumerary subunits COX4I1 (or COX4I2), COX5A, COX5B, COX6A1 (or COX6A2), COX6B1 (or COX6B2), COX6C, COX7A2 (or COX7A1), COX7B, COX7C, COX8A and NDUFA4, which are encoded in the nuclear genome. The complex exists as a monomer or a dimer and forms supercomplexes (SCs) in the inner mitochondrial membrane with NADH-ubiquinone oxidoreductase (complex I, CI) and ubiquinol-cytochrome c oxidoreductase (cytochrome b-c1 complex, complex III, CIII), resulting in different assemblies (supercomplex SCI(1)III(2)IV(1) and megacomplex MCI(2)III(2)IV(2)).

It localises to the mitochondrion inner membrane. It participates in energy metabolism; oxidative phosphorylation. Its function is as follows. Component of the cytochrome c oxidase, the last enzyme in the mitochondrial electron transport chain which drives oxidative phosphorylation. The respiratory chain contains 3 multisubunit complexes succinate dehydrogenase (complex II, CII), ubiquinol-cytochrome c oxidoreductase (cytochrome b-c1 complex, complex III, CIII) and cytochrome c oxidase (complex IV, CIV), that cooperate to transfer electrons derived from NADH and succinate to molecular oxygen, creating an electrochemical gradient over the inner membrane that drives transmembrane transport and the ATP synthase. Cytochrome c oxidase is the component of the respiratory chain that catalyzes the reduction of oxygen to water. Electrons originating from reduced cytochrome c in the intermembrane space (IMS) are transferred via the dinuclear copper A center (CU(A)) of subunit 2 and heme A of subunit 1 to the active site in subunit 1, a binuclear center (BNC) formed by heme A3 and copper B (CU(B)). The BNC reduces molecular oxygen to 2 water molecules using 4 electrons from cytochrome c in the IMS and 4 protons from the mitochondrial matrix. This is Cytochrome c oxidase subunit 5B, mitochondrial (COX5B) from Homo sapiens (Human).